The following is a 37-amino-acid chain: Large ribosomal subunit protein bL36 (37 aa).

This sequence belongs to the bacterial ribosomal protein bL36 family.

This is Large ribosomal subunit protein bL36 from Chromohalobacter salexigens (strain ATCC BAA-138 / DSM 3043 / CIP 106854 / NCIMB 13768 / 1H11).